The chain runs to 248 residues: 1-(5-phosphoribosyl)-5-[(5-phosphoribosylamino)methylideneamino] imidazole-4-carboxamide isomerase (248 aa).

The active-site Proton acceptor is Asp11. The active-site Proton donor is Asp132.

The protein belongs to the HisA/HisF family.

Its subcellular location is the cytoplasm. The enzyme catalyses 1-(5-phospho-beta-D-ribosyl)-5-[(5-phospho-beta-D-ribosylamino)methylideneamino]imidazole-4-carboxamide = 5-[(5-phospho-1-deoxy-D-ribulos-1-ylimino)methylamino]-1-(5-phospho-beta-D-ribosyl)imidazole-4-carboxamide. It functions in the pathway amino-acid biosynthesis; L-histidine biosynthesis; L-histidine from 5-phospho-alpha-D-ribose 1-diphosphate: step 4/9. The sequence is that of 1-(5-phosphoribosyl)-5-[(5-phosphoribosylamino)methylideneamino] imidazole-4-carboxamide isomerase from Bradyrhizobium diazoefficiens (strain JCM 10833 / BCRC 13528 / IAM 13628 / NBRC 14792 / USDA 110).